The chain runs to 230 residues: Orotidine 5'-phosphate decarboxylase (230 aa).

Substrate-binding positions include aspartate 8, lysine 30, 59–68 (DLKLYDIPNT), threonine 118, arginine 178, glutamine 187, glycine 207, and arginine 208. Catalysis depends on lysine 61, which acts as the Proton donor.

The protein belongs to the OMP decarboxylase family. Type 1 subfamily. In terms of assembly, homodimer.

It carries out the reaction orotidine 5'-phosphate + H(+) = UMP + CO2. Its pathway is pyrimidine metabolism; UMP biosynthesis via de novo pathway; UMP from orotate: step 2/2. Functionally, catalyzes the decarboxylation of orotidine 5'-monophosphate (OMP) to uridine 5'-monophosphate (UMP). This is Orotidine 5'-phosphate decarboxylase from Sulfurovum sp. (strain NBC37-1).